The primary structure comprises 227 residues: Cytochrome c oxidase subunit 2 (227 aa).

The Mitochondrial intermembrane segment spans residues 1 to 14 (MAYPFQLGLQDATS). Residues 15–45 (PIMEELLHFHDHTLMIVFLISSLVLYIITLM) traverse the membrane as a helical segment. At 46–59 (LTTKLTHTSTMDAQ) the chain is on the mitochondrial matrix side. The chain crosses the membrane as a helical span at residues 60-87 (EVETVWTILPAIILILIALPSLRILYMM). Residues 88 to 227 (DEINNPSLTV…YFETWSAVMV (140 aa)) are Mitochondrial intermembrane-facing. Residues histidine 161, cysteine 196, glutamate 198, cysteine 200, histidine 204, and methionine 207 each contribute to the Cu cation site. Residue glutamate 198 coordinates Mg(2+). At tyrosine 218 the chain carries Phosphotyrosine.

The protein belongs to the cytochrome c oxidase subunit 2 family. Component of the cytochrome c oxidase (complex IV, CIV), a multisubunit enzyme composed of 14 subunits. The complex is composed of a catalytic core of 3 subunits MT-CO1, MT-CO2 and MT-CO3, encoded in the mitochondrial DNA, and 11 supernumerary subunits COX4I, COX5A, COX5B, COX6A, COX6B, COX6C, COX7A, COX7B, COX7C, COX8 and NDUFA4, which are encoded in the nuclear genome. The complex exists as a monomer or a dimer and forms supercomplexes (SCs) in the inner mitochondrial membrane with NADH-ubiquinone oxidoreductase (complex I, CI) and ubiquinol-cytochrome c oxidoreductase (cytochrome b-c1 complex, complex III, CIII), resulting in different assemblies (supercomplex SCI(1)III(2)IV(1) and megacomplex MCI(2)III(2)IV(2)). Found in a complex with TMEM177, COA6, COX18, COX20, SCO1 and SCO2. Interacts with TMEM177 in a COX20-dependent manner. Interacts with COX20. Interacts with COX16. Requires Cu cation as cofactor.

The protein localises to the mitochondrion inner membrane. The catalysed reaction is 4 Fe(II)-[cytochrome c] + O2 + 8 H(+)(in) = 4 Fe(III)-[cytochrome c] + 2 H2O + 4 H(+)(out). Functionally, component of the cytochrome c oxidase, the last enzyme in the mitochondrial electron transport chain which drives oxidative phosphorylation. The respiratory chain contains 3 multisubunit complexes succinate dehydrogenase (complex II, CII), ubiquinol-cytochrome c oxidoreductase (cytochrome b-c1 complex, complex III, CIII) and cytochrome c oxidase (complex IV, CIV), that cooperate to transfer electrons derived from NADH and succinate to molecular oxygen, creating an electrochemical gradient over the inner membrane that drives transmembrane transport and the ATP synthase. Cytochrome c oxidase is the component of the respiratory chain that catalyzes the reduction of oxygen to water. Electrons originating from reduced cytochrome c in the intermembrane space (IMS) are transferred via the dinuclear copper A center (CU(A)) of subunit 2 and heme A of subunit 1 to the active site in subunit 1, a binuclear center (BNC) formed by heme A3 and copper B (CU(B)). The BNC reduces molecular oxygen to 2 water molecules using 4 electrons from cytochrome c in the IMS and 4 protons from the mitochondrial matrix. The polypeptide is Cytochrome c oxidase subunit 2 (MT-CO2) (Vulpes vulpes (Red fox)).